We begin with the raw amino-acid sequence, 250 residues long: 2,3-bisphosphoglycerate-dependent phosphoglycerate mutase (250 aa).

Residues 8–15 (RHGQSAWN), 21–22 (TG), arginine 60, 87–90 (ERHY), lysine 98, 114–115 (RR), and 183–184 (GN) each bind substrate. Catalysis depends on histidine 9, which acts as the Tele-phosphohistidine intermediate. Glutamate 87 serves as the catalytic Proton donor/acceptor.

This sequence belongs to the phosphoglycerate mutase family. BPG-dependent PGAM subfamily. Homodimer.

The enzyme catalyses (2R)-2-phosphoglycerate = (2R)-3-phosphoglycerate. The protein operates within carbohydrate degradation; glycolysis; pyruvate from D-glyceraldehyde 3-phosphate: step 3/5. Catalyzes the interconversion of 2-phosphoglycerate and 3-phosphoglycerate. This is 2,3-bisphosphoglycerate-dependent phosphoglycerate mutase from Nitratidesulfovibrio vulgaris (strain DP4) (Desulfovibrio vulgaris).